Reading from the N-terminus, the 376-residue chain is 5-amino-6-(D-ribitylamino)uracil--L-tyrosine 4-hydroxyphenyl transferase 1 (376 aa).

One can recognise a Radical SAM core domain in the interval 50 to 284 (VTYVVNRNIN…AISRILLHGH (235 aa)). [4Fe-4S] cluster-binding residues include Cys64, Cys68, and Cys71.

It belongs to the radical SAM superfamily. CofH family. As to quaternary structure, consists of two subunits, CofG and CofH. Requires [4Fe-4S] cluster as cofactor.

It catalyses the reaction 5-amino-6-(D-ribitylamino)uracil + L-tyrosine + S-adenosyl-L-methionine = 5-amino-5-(4-hydroxybenzyl)-6-(D-ribitylimino)-5,6-dihydrouracil + 2-iminoacetate + 5'-deoxyadenosine + L-methionine + H(+). It functions in the pathway cofactor biosynthesis; coenzyme F0 biosynthesis. Its function is as follows. Catalyzes the radical-mediated synthesis of 5-amino-5-(4-hydroxybenzyl)-6-(D-ribitylimino)-5,6-dihydrouracil from 5-amino-6-(D-ribitylamino)uracil and L-tyrosine. The sequence is that of 5-amino-6-(D-ribitylamino)uracil--L-tyrosine 4-hydroxyphenyl transferase 1 from Methanosarcina barkeri (strain Fusaro / DSM 804).